Here is a 201-residue protein sequence, read N- to C-terminus: Glutathione peroxidase 1 (201 aa).

Residue S32 is modified to Phosphoserine. The active site involves U47. Residue U47 is a non-standard amino acid, selenocysteine. An N6-acetyllysine; alternate mark is found at K86, K112, and K146. K86, K112, and K146 each carry N6-succinyllysine; alternate. Phosphoserine is present on residues S195 and S199.

This sequence belongs to the glutathione peroxidase family. As to quaternary structure, homotetramer. Interacts with MIEN1. In terms of processing, during periods of oxidative stress, Sec-47 may react with a superoxide radical, irreversibly lose hydroselenide and be converted to dehydroalanine.

Its subcellular location is the cytoplasm. The protein resides in the mitochondrion. The enzyme catalyses 2 glutathione + H2O2 = glutathione disulfide + 2 H2O. It catalyses the reaction a hydroperoxy polyunsaturated fatty acid + 2 glutathione = a hydroxy polyunsaturated fatty acid + glutathione disulfide + H2O. It carries out the reaction tert-butyl hydroperoxide + 2 glutathione = tert-butanol + glutathione disulfide + H2O. The catalysed reaction is cumene hydroperoxide + 2 glutathione = 2-phenylpropan-2-ol + glutathione disulfide + H2O. The enzyme catalyses (13S)-hydroperoxy-(9Z,11E)-octadecadienoate + 2 glutathione = (13S)-hydroxy-(9Z,11E)-octadecadienoate + glutathione disulfide + H2O. It catalyses the reaction (9S)-hydroperoxy-(10E,12Z)-octadecadienoate + 2 glutathione = (9S)-hydroxy-(10E,12Z)-octadecadienoate + glutathione disulfide + H2O. It carries out the reaction (5S)-hydroperoxy-(6E,8Z,11Z,14Z)-eicosatetraenoate + 2 glutathione = (5S)-hydroxy-(6E,8Z,11Z,14Z)-eicosatetraenoate + glutathione disulfide + H2O. The catalysed reaction is (12S)-hydroperoxy-(5Z,8Z,10E,14Z)-eicosatetraenoate + 2 glutathione = (12S)-hydroxy-(5Z,8Z,10E,14Z)-eicosatetraenoate + glutathione disulfide + H2O. The enzyme catalyses (12R)-hydroperoxy-(5Z,8Z,10E,14Z)-eicosatetraenoate + 2 glutathione = (12R)-hydroxy-(5Z,8Z,10E,14Z)-eicosatetraenoate + glutathione disulfide + H2O. It catalyses the reaction (15S)-hydroperoxy-(5Z,8Z,11Z,13E)-eicosatetraenoate + 2 glutathione = (15S)-hydroxy-(5Z,8Z,11Z,13E)-eicosatetraenoate + glutathione disulfide + H2O. It carries out the reaction (5S)-hydroperoxy-(6E,8Z,11Z,14Z,17Z)-eicosapentaenoate + 2 glutathione = (5S)-hydroxy-(6E,8Z,11Z,14Z,17Z)-eicosapentaenoate + glutathione disulfide + H2O. The catalysed reaction is (12S)-hydroperoxy-(5Z,8Z,10E,14Z,17Z)-eicosapentaenoate + 2 glutathione = (12S)-hydroxy-(5Z,8Z,10E,14Z,17Z)-eicosapentaenoate + glutathione disulfide + H2O. The enzyme catalyses (15S)-hydroperoxy-(5Z,8Z,11Z,13E,17Z)-eicosapentaenoate + 2 glutathione = (15S)-hydroxy-(5Z,8Z,11Z,13E,17Z)-eicosapentaenoate + glutathione disulfide + H2O. It catalyses the reaction (15S)-hydroperoxy-(11Z,13E)-eicosadienoate + 2 glutathione = (15S)-hydroxy-(11Z,13E)-eicosadienoate + glutathione disulfide + H2O. It carries out the reaction (17S)-hydroperoxy-(4Z,7Z,10Z,13Z,15E,19Z)-docosahexaenoate + 2 glutathione = (17S)-hydroxy-(4Z,7Z,10Z,13Z,15E,19Z)-docosahexaenoate + glutathione disulfide + H2O. Functionally, catalyzes the reduction of hydroperoxides in a glutathione-dependent manner thus regulating cellular redox homeostasis. Can reduce small soluble hydroperoxides such as H2O2, cumene hydroperoxide and tert-butyl hydroperoxide, as well as several fatty acid-derived hydroperoxides. In platelets catalyzes the reduction of 12-hydroperoxyeicosatetraenoic acid, the primary product of the arachidonate 12-lipoxygenase pathway. In Macaca fuscata fuscata (Japanese macaque), this protein is Glutathione peroxidase 1 (GPX1).